Consider the following 119-residue polypeptide: MVFNMRSTRGIFSSFESGYRFASYTLELSPFKTLIKIEIPMCWKPLVCASVLAWSRAIGEFGATLMLAGATRFKTETLPMAVYLNISSGDFEIAIGASLWLLFISSCLLLVLRMINRAV.

Positions 1–112 (MVFNMRSTRG…FISSCLLLVL (112 aa)) constitute an ABC transmembrane type-1 domain. A run of 2 helical transmembrane segments spans residues 51 to 73 (VLAWSRAIGEFGATLMLAGATRF) and 91 to 111 (FEIAIGASLWLLFISSCLLLV).

Belongs to the binding-protein-dependent transport system permease family. CysTW subfamily.

The protein resides in the cell membrane. This is an uncharacterized protein from Haemophilus influenzae (strain ATCC 51907 / DSM 11121 / KW20 / Rd).